Reading from the N-terminus, the 335-residue chain is Phenylalanine--tRNA ligase alpha subunit (335 aa).

E262 provides a ligand contact to Mg(2+).

This sequence belongs to the class-II aminoacyl-tRNA synthetase family. Phe-tRNA synthetase alpha subunit type 1 subfamily. In terms of assembly, tetramer of two alpha and two beta subunits. Mg(2+) is required as a cofactor.

It is found in the cytoplasm. The enzyme catalyses tRNA(Phe) + L-phenylalanine + ATP = L-phenylalanyl-tRNA(Phe) + AMP + diphosphate + H(+). This Prochlorococcus marinus subsp. pastoris (strain CCMP1986 / NIES-2087 / MED4) protein is Phenylalanine--tRNA ligase alpha subunit.